The sequence spans 369 residues: Tyrosinase-like protein orsC (369 aa).

The first 23 residues, 1–23 (MLAFNPLVTALAALIFLFCQANA), serve as a signal peptide directing secretion. Cu cation contacts are provided by histidine 112 and histidine 121. 4 N-linked (GlcNAc...) asparagine glycosylation sites follow: asparagine 165, asparagine 179, asparagine 253, and asparagine 272. Histidine 315 contacts Cu cation.

Its pathway is secondary metabolite biosynthesis. In terms of biological role, tyrosinase-like protein; part of the gene cluster that mediates the biosynthesis of orsellinic acid, as well as of the cathepsin K inhibitors F9775 A and F9775 B. The non-reducing polyketide synthase orsA produces orsellinic acid by condensing acetyl-CoA with 3 malonyl-CoA units. Further modifications by the decarboxylase orsB and the tyrosinase-like protein orsC lead to the production of F9775 A and F9775 B. The functions of orsD and orsE remain unclear since only orsB and orsC are required to convert orsellinic acid into F9775 A and F9775 B. The sequence is that of Tyrosinase-like protein orsC from Emericella nidulans (strain FGSC A4 / ATCC 38163 / CBS 112.46 / NRRL 194 / M139) (Aspergillus nidulans).